Reading from the N-terminus, the 86-residue chain is Putative membrane protein insertion efficiency factor (86 aa).

Positions 66-86 (FSKGGFDPVPPHDGVPGKKED) are disordered.

Belongs to the UPF0161 family.

It localises to the cell inner membrane. Its function is as follows. Could be involved in insertion of integral membrane proteins into the membrane. The chain is Putative membrane protein insertion efficiency factor from Chlorobium luteolum (strain DSM 273 / BCRC 81028 / 2530) (Pelodictyon luteolum).